The primary structure comprises 25 residues: Small ribosomal subunit protein eS32 (25 aa).

A disordered region spans residues 1–25 (MRDKWRKKRVRRLKRKRRKVRARSK).

Belongs to the eukaryotic ribosomal protein eS32 family. In terms of assembly, component of the small ribosomal subunit. Mature ribosomes consist of a small (40S) and a large (60S) subunit. The 40S subunit contains about 32 different proteins and 1 molecule of RNA (18S). The 60S subunit contains 45 different proteins and 3 molecules of RNA (25S, 5.8S and 5S).

Its subcellular location is the cytoplasm. Its function is as follows. Component of the ribosome, a large ribonucleoprotein complex responsible for the synthesis of proteins in the cell. The small ribosomal subunit (SSU) binds messenger RNAs (mRNAs) and translates the encoded message by selecting cognate aminoacyl-transfer RNA (tRNA) molecules. The large subunit (LSU) contains the ribosomal catalytic site termed the peptidyl transferase center (PTC), which catalyzes the formation of peptide bonds, thereby polymerizing the amino acids delivered by tRNAs into a polypeptide chain. The nascent polypeptides leave the ribosome through a tunnel in the LSU and interact with protein factors that function in enzymatic processing, targeting, and the membrane insertion of nascent chains at the exit of the ribosomal tunnel. The chain is Small ribosomal subunit protein eS32 from Candida albicans (strain SC5314 / ATCC MYA-2876) (Yeast).